Consider the following 495-residue polypeptide: Cytochrome P450 monooxygenase cnsC (495 aa).

Cysteine 434 lines the heme pocket.

Belongs to the cytochrome P450 family. The cofactor is heme.

It functions in the pathway alkaloid biosynthesis. Cytochrome P450 monooxygenase; part of the gene cluster that mediates the biosynthesis of communesins, a prominent class of indole alkaloids with great potential as pharmaceuticals. Communesins are biosynthesized by the coupling of tryptamine and aurantioclavine, two building blocks derived from L-tryptophan. The L-tryptophan decarboxylase cnsB converts L-tryptophan to tryptamine, whereas the tryptophan dimethylallyltransferase cnsF converts L-tryptophan to 4-dimethylallyl tryptophan which is further transformed to aurantioclavine by the aurantioclavine synthase cnsA, probably aided by the catalase cnsD. The cytochrome P450 monooxygenase cnsC catalyzes the heterodimeric coupling between the two different indole moieties, tryptamine and aurantioclavine, to construct vicinal quaternary stereocenters and yield the heptacyclic communesin scaffold. The O-methyltransferase cnsE then methylates the communesin scaffold to produce communesin K, the simplest characterized communesin that contains the heptacyclic core. The dioxygenase cnsJ converts communesin K into communesin I. Acylation to introduce the hexadienyl group at position N16 of communesin I by the acyltransferase cnsK leads to the production of communesin B. The hexadienyl group is produced by the highly reducing polyketide synthase cnsI, before being hydrolytically removed from cnsI by the serine hydrolase cnsH, converted into hexadienyl-CoA by the CoA ligase cnsG, and then transferred to communesin I by cnsK. Surprisingly, cnsK may also be a promiscuous acyltransferase that can tolerate a range of acyl groups, including acetyl-, propionyl-, and butyryl-CoA, which lead to communesins A, G and H respectively. The roles of the alpha-ketoglutarate-dependent dioxygenases cnsM and cnsP have still to be determined. The polypeptide is Cytochrome P450 monooxygenase cnsC (Penicillium expansum (Blue mold rot fungus)).